The following is a 363-amino-acid chain: Putative agmatine deiminase 1 (363 aa).

Residue Cys356 is the Amidino-cysteine intermediate of the active site.

The protein belongs to the agmatine deiminase family.

The catalysed reaction is agmatine + H2O = N-carbamoylputrescine + NH4(+). This chain is Putative agmatine deiminase 1, found in Listeria monocytogenes serovar 1/2a (strain ATCC BAA-679 / EGD-e).